A 484-amino-acid polypeptide reads, in one-letter code: Notoamide biosynthesis transcriptional activator notL (484 aa).

The zn(2)-C6 fungal-type DNA-binding region spans cysteine 33 to cysteine 60. 2 disordered regions span residues arginine 70 to valine 154 and glycine 363 to proline 387. Over residues threonine 76–proline 122 the composition is skewed to low complexity. Residues threonine 123–serine 133 are compositionally biased toward basic and acidic residues. 2 stretches are compositionally biased toward polar residues: residues alanine 139–valine 154 and aspartate 368–isoleucine 378.

The protein localises to the nucleus. Functionally, transcription factor that probably regulates the expression of the gene cluster that mediates the biosynthesis of notoamide, a fungal indole alkaloid that belongs to a family of natural products containing a characteristic bicyclo[2.2.2]diazaoctane core. The polypeptide is Notoamide biosynthesis transcriptional activator notL (Aspergillus sp. (strain MF297-2)).